We begin with the raw amino-acid sequence, 408 residues long: Glutathione-independent formaldehyde dehydrogenase (408 aa).

Cys61 is a Zn(2+) binding site. Gly62, Ser63, and His66 together coordinate NAD(+). Residues His82, Cys112, Cys115, Cys118, Cys126, and Asp184 each contribute to the Zn(2+) site. 9 residues coordinate NAD(+): Val212, Asp232, Arg237, Val277, His284, Pro311, Leu313, Gly348, and Thr350.

The protein belongs to the zinc-containing alcohol dehydrogenase family. It depends on Zn(2+) as a cofactor.

The catalysed reaction is formaldehyde + NAD(+) + H2O = formate + NADH + 2 H(+). With respect to regulation, activity is not inhibited by EDTA, which is probably not sufficient to displace the bound metal. Functionally, dehydrogenase that catalyzes the NAD(+)-dependent oxidation of formaldehyde. Exhibits lower activity with acetaldehyde (about 10-fold lower than for formaldehyde), but cannot use methanol, ethanol, 1-butanol, glyoxal or formic acid. Is involved in formaldehyde detoxification. This chain is Glutathione-independent formaldehyde dehydrogenase, found in Bacillus subtilis (strain 168).